The sequence spans 364 residues: 3-isopropylmalate dehydrogenase (364 aa).

Residue 77–90 (GPKWDNLPTDKRPE) coordinates NAD(+). The substrate site is built by Arg97, Arg107, Arg135, and Asp224. The Mg(2+) site is built by Asp224, Asp248, and Asp252. 281 to 293 (GSAPDIAGKGIAN) is an NAD(+) binding site.

Belongs to the isocitrate and isopropylmalate dehydrogenases family. LeuB type 1 subfamily. Homodimer. The cofactor is Mg(2+). Mn(2+) serves as cofactor.

It is found in the cytoplasm. The catalysed reaction is (2R,3S)-3-isopropylmalate + NAD(+) = 4-methyl-2-oxopentanoate + CO2 + NADH. It participates in amino-acid biosynthesis; L-leucine biosynthesis; L-leucine from 3-methyl-2-oxobutanoate: step 3/4. Catalyzes the oxidation of 3-carboxy-2-hydroxy-4-methylpentanoate (3-isopropylmalate) to 3-carboxy-4-methyl-2-oxopentanoate. The product decarboxylates to 4-methyl-2 oxopentanoate. This Aquifex aeolicus (strain VF5) protein is 3-isopropylmalate dehydrogenase (leuB).